Reading from the N-terminus, the 539-residue chain is Chaperonin GroEL (539 aa).

ATP contacts are provided by residues Thr-29–Pro-32, Asp-86–Thr-90, Gly-413, Asn-476–Ala-478, and Asp-492.

The protein belongs to the chaperonin (HSP60) family. As to quaternary structure, forms a cylinder of 14 subunits composed of two heptameric rings stacked back-to-back. Interacts with the co-chaperonin GroES.

The protein localises to the cytoplasm. The enzyme catalyses ATP + H2O + a folded polypeptide = ADP + phosphate + an unfolded polypeptide.. In terms of biological role, together with its co-chaperonin GroES, plays an essential role in assisting protein folding. The GroEL-GroES system forms a nano-cage that allows encapsulation of the non-native substrate proteins and provides a physical environment optimized to promote and accelerate protein folding. This Staphylococcus epidermidis protein is Chaperonin GroEL.